A 335-amino-acid polypeptide reads, in one-letter code: Beta-ketoacyl-[acyl-carrier-protein] synthase III (335 aa).

Residues C116 and H256 contribute to the active site. The segment at 257–261 (QANLR) is ACP-binding. Residue N286 is part of the active site.

This sequence belongs to the thiolase-like superfamily. FabH family. In terms of assembly, homodimer.

It localises to the cytoplasm. It catalyses the reaction malonyl-[ACP] + acetyl-CoA + H(+) = 3-oxobutanoyl-[ACP] + CO2 + CoA. The protein operates within lipid metabolism; fatty acid biosynthesis. Its function is as follows. Catalyzes the condensation reaction of fatty acid synthesis by the addition to an acyl acceptor of two carbons from malonyl-ACP. Catalyzes the first condensation reaction which initiates fatty acid synthesis and may therefore play a role in governing the total rate of fatty acid production. Possesses both acetoacetyl-ACP synthase and acetyl transacylase activities. Its substrate specificity determines the biosynthesis of branched-chain and/or straight-chain of fatty acids. The chain is Beta-ketoacyl-[acyl-carrier-protein] synthase III from Porphyromonas gingivalis (strain ATCC BAA-308 / W83).